The sequence spans 150 residues: Nucleoside diphosphate kinase (150 aa).

6 residues coordinate ATP: K10, F58, R86, T92, R103, and N113. Catalysis depends on H116, which acts as the Pros-phosphohistidine intermediate.

It belongs to the NDK family. Requires Mg(2+) as cofactor.

Its subcellular location is the cytoplasm. It catalyses the reaction a 2'-deoxyribonucleoside 5'-diphosphate + ATP = a 2'-deoxyribonucleoside 5'-triphosphate + ADP. The enzyme catalyses a ribonucleoside 5'-diphosphate + ATP = a ribonucleoside 5'-triphosphate + ADP. Functionally, major role in the synthesis of nucleoside triphosphates other than ATP. The ATP gamma phosphate is transferred to the NDP beta phosphate via a ping-pong mechanism, using a phosphorylated active-site intermediate. The chain is Nucleoside diphosphate kinase from Methanobrevibacter smithii (strain ATCC 35061 / DSM 861 / OCM 144 / PS).